The following is a 287-amino-acid chain: Phosphoribosylaminoimidazole-succinocarboxamide synthase (287 aa).

It belongs to the SAICAR synthetase family.

The enzyme catalyses 5-amino-1-(5-phospho-D-ribosyl)imidazole-4-carboxylate + L-aspartate + ATP = (2S)-2-[5-amino-1-(5-phospho-beta-D-ribosyl)imidazole-4-carboxamido]succinate + ADP + phosphate + 2 H(+). The protein operates within purine metabolism; IMP biosynthesis via de novo pathway; 5-amino-1-(5-phospho-D-ribosyl)imidazole-4-carboxamide from 5-amino-1-(5-phospho-D-ribosyl)imidazole-4-carboxylate: step 1/2. The sequence is that of Phosphoribosylaminoimidazole-succinocarboxamide synthase from Neisseria meningitidis serogroup C (strain 053442).